A 541-amino-acid polypeptide reads, in one-letter code: Chaperonin GroEL (541 aa).

ATP-binding positions include 29–32 (TLGP), 86–90 (DGTTT), G413, 476–478 (NAA), and D492.

Belongs to the chaperonin (HSP60) family. In terms of assembly, forms a cylinder of 14 subunits composed of two heptameric rings stacked back-to-back. Interacts with the co-chaperonin GroES.

The protein localises to the cytoplasm. The enzyme catalyses ATP + H2O + a folded polypeptide = ADP + phosphate + an unfolded polypeptide.. Its function is as follows. Together with its co-chaperonin GroES, plays an essential role in assisting protein folding. The GroEL-GroES system forms a nano-cage that allows encapsulation of the non-native substrate proteins and provides a physical environment optimized to promote and accelerate protein folding. The protein is Chaperonin GroEL of Rhodococcus hoagii (Corynebacterium equii).